Reading from the N-terminus, the 545-residue chain is CTP synthase (545 aa).

Positions 1-266 (MTTNYIFVTG…DDLVCARFGI (266 aa)) are amidoligase domain. Ser-14 serves as a coordination point for CTP. Position 14 (Ser-14) interacts with UTP. ATP contacts are provided by residues 15 to 20 (SLGKGI) and Asp-72. Residues Asp-72 and Glu-140 each contribute to the Mg(2+) site. CTP-binding positions include 147–149 (DIE), 187–192 (KTKPTQ), and Lys-223. UTP is bound by residues 187–192 (KTKPTQ) and Lys-223. An ATP-binding site is contributed by 239–241 (KDV). The Glutamine amidotransferase type-1 domain maps to 291–542 (TIGMVGKYIE…IKAAGENARG (252 aa)). Gly-352 contacts L-glutamine. Cys-379 acts as the Nucleophile; for glutamine hydrolysis in catalysis. L-glutamine is bound by residues 380–383 (LGMQ), Glu-403, and Arg-470. Catalysis depends on residues His-515 and Glu-517.

This sequence belongs to the CTP synthase family. Homotetramer.

The catalysed reaction is UTP + L-glutamine + ATP + H2O = CTP + L-glutamate + ADP + phosphate + 2 H(+). It catalyses the reaction L-glutamine + H2O = L-glutamate + NH4(+). The enzyme catalyses UTP + NH4(+) + ATP = CTP + ADP + phosphate + 2 H(+). Its pathway is pyrimidine metabolism; CTP biosynthesis via de novo pathway; CTP from UDP: step 2/2. Allosterically activated by GTP, when glutamine is the substrate; GTP has no effect on the reaction when ammonia is the substrate. The allosteric effector GTP functions by stabilizing the protein conformation that binds the tetrahedral intermediate(s) formed during glutamine hydrolysis. Inhibited by the product CTP, via allosteric rather than competitive inhibition. Functionally, catalyzes the ATP-dependent amination of UTP to CTP with either L-glutamine or ammonia as the source of nitrogen. Regulates intracellular CTP levels through interactions with the four ribonucleotide triphosphates. This Vibrio vulnificus (strain CMCP6) protein is CTP synthase.